A 303-amino-acid chain; its full sequence is Albumin b-32 (303 aa).

A compositionally biased stretch (low complexity) spans 112–137; that stretch reads ATPTSSATTPGGSASAAGTRTSSATR. The tract at residues 112-175 is disordered; the sequence is ATPTSSATTP…GGGGADADAD (64 aa). Residues 146–156 show a composition bias toward basic and acidic residues; the sequence is ARDDQGRQRPG.

It belongs to the ribosome-inactivating protein family. Type 1 RIP subfamily. As to quaternary structure, monomer. Endosperm.

The protein resides in the cytoplasm. It carries out the reaction Endohydrolysis of the N-glycosidic bond at one specific adenosine on the 28S rRNA.. In terms of biological role, a possible regulatory factor for the synthesis of zeins, the major group of storage proteins. The protein is Albumin b-32 (O6) of Zea mays (Maize).